The primary structure comprises 363 residues: Galactokinase (363 aa).

Substrate is bound at residue 16–19 (EHTD). Residues Ser50 and 103–109 (GSGLSSS) contribute to the ATP site. The Mg(2+) site is built by Ser109 and Glu141. Asp153 acts as the Proton acceptor in catalysis. Tyr205 contributes to the substrate binding site.

This sequence belongs to the GHMP kinase family. GalK subfamily.

It is found in the cytoplasm. The catalysed reaction is alpha-D-galactose + ATP = alpha-D-galactose 1-phosphate + ADP + H(+). The protein operates within carbohydrate metabolism; galactose metabolism. In terms of biological role, catalyzes the transfer of the gamma-phosphate of ATP to D-galactose to form alpha-D-galactose-1-phosphate (Gal-1-P). The protein is Galactokinase of Mycobacterium tuberculosis (strain ATCC 25177 / H37Ra).